The following is a 420-amino-acid chain: UDP-N-acetylglucosamine 1-carboxyvinyltransferase (420 aa).

22–23 (KN) serves as a coordination point for phosphoenolpyruvate. UDP-N-acetyl-alpha-D-glucosamine is bound at residue Arg91. The Proton donor role is filled by Cys115. At Cys115 the chain carries 2-(S-cysteinyl)pyruvic acid O-phosphothioketal. Residues 120–124 (RPVDL), 160–163 (KVSV), Asp305, and Ile327 each bind UDP-N-acetyl-alpha-D-glucosamine.

It belongs to the EPSP synthase family. MurA subfamily.

Its subcellular location is the cytoplasm. It carries out the reaction phosphoenolpyruvate + UDP-N-acetyl-alpha-D-glucosamine = UDP-N-acetyl-3-O-(1-carboxyvinyl)-alpha-D-glucosamine + phosphate. It functions in the pathway cell wall biogenesis; peptidoglycan biosynthesis. Its function is as follows. Cell wall formation. Adds enolpyruvyl to UDP-N-acetylglucosamine. The polypeptide is UDP-N-acetylglucosamine 1-carboxyvinyltransferase (Proteus mirabilis (strain HI4320)).